Here is a 174-residue protein sequence, read N- to C-terminus: Gamma-crystallin D (174 aa).

Beta/gamma crystallin 'Greek key' domains lie at 2–40 (GKITFYEDRGFQGRHYECSSDHSNLQPYLGRCNSVRVDS) and 41–83 (GCWM…RLIP). The segment at 84–87 (HAGS) is connecting peptide. 2 consecutive Beta/gamma crystallin 'Greek key' domains span residues 88–128 (HRLR…NVLE) and 129–171 (GSWV…RRVI).

The protein belongs to the beta/gamma-crystallin family.

In terms of biological role, crystallins are the dominant structural components of the vertebrate eye lens. This Bos taurus (Bovine) protein is Gamma-crystallin D (CRYGD).